The primary structure comprises 638 residues: Sodium- and chloride-dependent glycine transporter 1 (638 aa).

A disordered region spans residues 1 to 29; that stretch reads MAAAQGPVAPSSLEQNGAVPSEATKKDQN. Over 1 to 40 the chain is Cytoplasmic; it reads MAAAQGPVAPSSLEQNGAVPSEATKKDQNLKRGNWGNQIE. 3 helical membrane passes run 41-61, 69-88, and 112-132; these read FVLTSVGYAVGLGNVWRFPYL, AFMFPYFIMLIFCGIPLFFM, and GVGYGMMVVSTYIGIYYNVVI. Residues 133–219 are Extracellular-facing; that stretch reads CIAFYYFFSS…DDIGNFGEVR (87 aa). 4 N-linked (GlcNAc...) asparagine glycosylation sites follow: Asn169, Asn172, Asn182, and Asn188. The next 9 membrane-spanning stretches (helical) occupy residues 220–238, 247–264, 300–317, 329–350, 383–402, 431–449, 465–485, 506–525, and 544–562; these read LPLLGCLGVSWVVVFLCLI, VVYFTATFPYVVLTILFI, IFYSLGCAWGGLVTMASY, VIISITNCATSVYAGFVIFSIL, LPISPLWSLLFFFMLILLGL, YVTLGVAVAGFLLGIPLTS, SFSLVIISCIMCVSIMYIYGH, ICWRFVSPAIIFFILIFSVI, and IGFLMALSSVICIPLYALF. Residues 563-638 are Cytoplasmic-facing; that stretch reads QFCRTDGDTL…GSSRFQDSRI (76 aa). Positions 597 to 638 are disordered; it reads RYAPTTTPSPEDGLEVQPLHPDKAQIPMVGSNGSSRFQDSRI. Thr603 is modified (phosphothreonine). Phosphoserine is present on residues Ser605 and Ser630. Residues 627–638 form an essential for interaction with EXOC1 region; sequence SNGSSRFQDSRI. The segment covering 627 to 638 has biased composition (polar residues); sequence SNGSSRFQDSRI.

The protein belongs to the sodium:neurotransmitter symporter (SNF) (TC 2.A.22) family. SLC6A9 subfamily. As to quaternary structure, interacts with EXOC1; interaction increases the transporter capacity of SLC6A9 probably by promoting its insertion into the cell membrane. Interacts with EXOC3 and EXOC4.

Its subcellular location is the cell membrane. It carries out the reaction glycine(out) + chloride(out) + 2 Na(+)(out) = glycine(in) + chloride(in) + 2 Na(+)(in). In terms of biological role, sodium- and chloride-dependent glycine transporter which is essential for regulating glycine concentrations at inhibitory glycinergic synapses. This Bos taurus (Bovine) protein is Sodium- and chloride-dependent glycine transporter 1 (SLC6A9).